A 90-amino-acid polypeptide reads, in one-letter code: Small ribosomal subunit protein bS16 (90 aa).

The protein belongs to the bacterial ribosomal protein bS16 family.

The protein is Small ribosomal subunit protein bS16 of Listeria monocytogenes serotype 4b (strain F2365).